A 287-amino-acid polypeptide reads, in one-letter code: ATP synthase gamma chain (287 aa).

It belongs to the ATPase gamma chain family. In terms of assembly, F-type ATPases have 2 components, CF(1) - the catalytic core - and CF(0) - the membrane proton channel. CF(1) has five subunits: alpha(3), beta(3), gamma(1), delta(1), epsilon(1). CF(0) has three main subunits: a, b and c.

It localises to the cell inner membrane. Functionally, produces ATP from ADP in the presence of a proton gradient across the membrane. The gamma chain is believed to be important in regulating ATPase activity and the flow of protons through the CF(0) complex. In Hahella chejuensis (strain KCTC 2396), this protein is ATP synthase gamma chain.